Consider the following 512-residue polypeptide: Glycine betaine transporter OpuD (512 aa).

12 helical membrane-spanning segments follow: residues 5–25, 45–65, 82–102, 135–155, 186–206, 222–242, 257–277, 312–332, 343–363, 395–415, 441–461, and 464–484; these read ISSV…WGVI, FGWY…FLIF, FGLL…GLVF, FFHW…CIAY, IDCI…GLGA, AFIV…LSAW, MVLA…VLIM, WTIF…IFIA, FLIG…SIFG, LTMV…ITSA, WGII…LAAL, and TAIL…ASLY.

This sequence belongs to the BCCT transporter (TC 2.A.15) family.

The protein resides in the cell membrane. Its activity is regulated as follows. Activity is stimulated by high osmolarity. High-affinity uptake of glycine betaine. Does not mediate either carnitine or choline uptake. This chain is Glycine betaine transporter OpuD (opuD), found in Bacillus subtilis (strain 168).